A 742-amino-acid chain; its full sequence is Alginate lyase (742 aa).

The N-terminal stretch at 1–26 is a signal peptide; the sequence is MRLQPLFVSLALAAPCALLPTASLSA. Substrate contacts are provided by residues Arg-143, 153-156, Gln-204, His-208, and 263-266; these read QVLN and YYQR. Catalysis depends on Tyr-264, which acts as the Proton donor. His-418 functions as the Proton acceptor in the catalytic mechanism. The Zn(2+) site is built by His-420 and Asp-438. Arg-443 is a binding site for substrate. His-469 contributes to the Zn(2+) binding site. Glu-669 provides a ligand contact to substrate.

It belongs to the polysaccharide lyase 17 family. In terms of assembly, homodimer. Zn(2+) is required as a cofactor.

It localises to the periplasm. It catalyses the reaction Cleavage of 4-deoxy-alpha-L-erythro-hex-4-enopyranuronoside oligosaccharides into 4-deoxy-alpha-L-erythro-hex-4-enopyranuronate monosaccharides.. Functionally, polysaccharide lyase that catalyzes the depolymerization of alginate via a beta-elimination mechanism, cleaving the beta-1,4 glycosidic bond between two adjacent sugar residues. Acts specifically on alginate and each of its block structures, with highest activity toward poly-beta-D-mannuronate (poly-ManA). Shows an exolytic mode of action, producing unsaturated monomers. Displays a very low activity against poly-beta-D-glucuronate (poly-GlcA), and is not active on poly-alpha-D-galacturonate, hyaluronan, heparin, heparan sulfate and chondroitin sulfate. The polypeptide is Alginate lyase (Stenotrophomonas maltophilia (strain K279a)).